The sequence spans 426 residues: Dihydropyrimidine dehydrogenase (NADP(+)), chloroplastic (426 aa).

The N-terminal 44 residues, 1 to 44, are a transit peptide targeting the chloroplast; the sequence is MASMSFALNRFSGLSSKTTLSADFDPSSRRSFLPPTRVGLKISS. A45 bears the N-acetylalanine mark. Residues N129 and 188-190 contribute to the substrate site; that span reads NFS. C191 (nucleophile) is an active-site residue. 256–257 is a binding site for substrate; that stretch reads NT. A disordered region spans residues 395–414; it reads VEQRKAEKRGLKSDKDWTGD.

The protein belongs to the dihydropyrimidine dehydrogenase family. As to expression, expressed in roots, leaves, stems, siliques and flowers. Highly expressed ion dry seeds.

It localises to the plastid. Its subcellular location is the chloroplast. It catalyses the reaction 5,6-dihydrouracil + NADP(+) = uracil + NADPH + H(+). The protein operates within amino-acid biosynthesis; beta-alanine biosynthesis. Its function is as follows. Involved in pyrimidine base degradation. Catalyzes the reduction of uracil to 5,6-dihydrouracil (DHU) by using NADH as a specific cosubstrate and the reduction of thymine to 5,6-dihydrothymine (DHT). Involved in the recycling of nitrogen from nucleobases to general nitrogen metabolism. The chain is Dihydropyrimidine dehydrogenase (NADP(+)), chloroplastic from Arabidopsis thaliana (Mouse-ear cress).